A 225-amino-acid polypeptide reads, in one-letter code: U2 small nuclear ribonucleoprotein B'' (225 aa).

Positions 7-86 (HTIYINNMND…KPMRIQYAKT (80 aa)) constitute an RRM 1 domain. Residues 99 to 145 (ADKEKKKEKKKAKTVEQTATTTNKKPGQGTPNSANTQGNSTPNPQVP) are disordered. Position 111 is an N6-acetyllysine; alternate (K111). K111 is covalently cross-linked (Glycyl lysine isopeptide (Lys-Gly) (interchain with G-Cter in SUMO2); alternate). Residues 113–123 (VEQTATTTNKK) show a composition bias toward low complexity. Residues 127 to 141 (GTPNSANTQGNSTPN) are compositionally biased toward polar residues. Position 151 is a phosphotyrosine (Y151). Residues 151-225 (YILFLNNLPE…HAMKITYAKK (75 aa)) enclose the RRM 2 domain.

It belongs to the RRM U1 A/B'' family. In terms of assembly, identified in the spliceosome B complex. Identified in the spliceosome C complex. Present in a spliceosome complex assembled in vitro, and composed of SNRPB2, HPRP8BP and CRNKL1. Contributes to the binding of stem loop IV of U2 snRNA with SNRPP1.

It localises to the nucleus. Involved in pre-mRNA splicing as component of the spliceosome. Associated with sn-RNP U2, where it contributes to the binding of stem loop IV of U2 snRNA. This is U2 small nuclear ribonucleoprotein B'' (SNRPB2) from Homo sapiens (Human).